The following is a 455-amino-acid chain: Transcription factor mokH (455 aa).

The interval 1–22 (MALSPVQDPPSHTDKTMPRRAF) is disordered. Residues 26–58 (CDRCHAQKIKCIGSEGAVARASCQRCQQAGLRC) constitute a DNA-binding region (zn(2)-C6 fungal-type). Disordered regions lie at residues 68–113 (KLPK…DSSG) and 296–317 (LTPLEGHQFEPPPSSSRDRSSV). Residues 75-88 (AESSPASSTAGLHT) show a composition bias toward polar residues. Low complexity predominate over residues 89–113 (SSSDSSPPVPSDGLPLDLPGPDSSG).

Its subcellular location is the nucleus. Its function is as follows. Transcription factor that regulates the gene cluster that mediates the biosynthesis of monakolin K, also known as lovastatin, and which acts as a potent competitive inhibitor of HMG-CoA reductase. Monakolin K biosynthesis is performed in two stages. The first stage is catalyzed by the nonaketide synthase mokA, which belongs to type I polyketide synthases and catalyzes the iterative nine-step formation of the polyketide. This PKS stage is completed by the action of dehydrogenase mokE, which catalyzes the NADPH-dependent reduction of the unsaturated tetra-, penta- and heptaketide intermediates that arise during the mokA-mediated biosynthesis of the nonaketide chain and leads to dihydromonacolin L. Covalently bound dihydromonacolin L is released from mokA by the mokD esterase. Conversion of dihydromonacolin L into monacolin L and then monacolin J is subsequently performed with the participation of molecular oxygen and P450 monoogygenase mokC. Finally, mokF performs the conversion of monacoline J to monacoline K through the addition of the side-chain diketide moiety (2R)-2-methylbutanoate produced by the diketide synthase mokB. HMG-CoA reductase mokG may act as a down-regulator of monacolin K production. This is Transcription factor mokH from Monascus pilosus (Red mold).